The primary structure comprises 366 residues: 5-formaminoimidazole-4-carboxamide-1-(beta)-D-ribofuranosyl 5'-monophosphate synthetase (366 aa).

2 residues coordinate 5-amino-1-(5-phospho-beta-D-ribosyl)imidazole-4-carboxamide: histidine 27 and serine 96. In terms of domain architecture, ATP-grasp spans 131–357; the sequence is RKWLEDAGVP…IAREIKEAVK (227 aa). ATP is bound by residues 154–208 and glutamate 239; that span reads PVIV…VRFY. A 5-amino-1-(5-phospho-beta-D-ribosyl)imidazole-4-carboxamide-binding site is contributed by asparagine 263. 2 residues coordinate Mg(2+): glutamate 302 and glutamate 315.

It belongs to the phosphohexose mutase family. Mg(2+) is required as a cofactor. Requires Mn(2+) as cofactor.

The catalysed reaction is 5-amino-1-(5-phospho-beta-D-ribosyl)imidazole-4-carboxamide + formate + ATP = 5-formamido-1-(5-phospho-D-ribosyl)imidazole-4-carboxamide + ADP + phosphate. The protein operates within purine metabolism; IMP biosynthesis via de novo pathway; 5-formamido-1-(5-phospho-D-ribosyl)imidazole-4-carboxamide from 5-amino-1-(5-phospho-D-ribosyl)imidazole-4-carboxamide (formate route): step 1/1. Its function is as follows. Catalyzes the ATP- and formate-dependent formylation of 5-aminoimidazole-4-carboxamide-1-beta-d-ribofuranosyl 5'-monophosphate (AICAR) to 5-formaminoimidazole-4-carboxamide-1-beta-d-ribofuranosyl 5'-monophosphate (FAICAR) in the absence of folates. This is 5-formaminoimidazole-4-carboxamide-1-(beta)-D-ribofuranosyl 5'-monophosphate synthetase from Korarchaeum cryptofilum (strain OPF8).